The following is a 118-amino-acid chain: Ribosome-binding factor A (118 aa).

This sequence belongs to the RbfA family. As to quaternary structure, monomer. Binds 30S ribosomal subunits, but not 50S ribosomal subunits or 70S ribosomes.

The protein resides in the cytoplasm. One of several proteins that assist in the late maturation steps of the functional core of the 30S ribosomal subunit. Associates with free 30S ribosomal subunits (but not with 30S subunits that are part of 70S ribosomes or polysomes). Required for efficient processing of 16S rRNA. May interact with the 5'-terminal helix region of 16S rRNA. The chain is Ribosome-binding factor A from Bacillus cereus (strain B4264).